The following is a 912-amino-acid chain: Protein translocase subunit SecA (912 aa).

ATP contacts are provided by residues Q87, 105 to 109 (GEGKT), and D512. C896, C898, C907, and H908 together coordinate Zn(2+).

It belongs to the SecA family. In terms of assembly, monomer and homodimer. Part of the essential Sec protein translocation apparatus which comprises SecA, SecYEG and auxiliary proteins SecDF-YajC and YidC. The cofactor is Zn(2+).

Its subcellular location is the cell inner membrane. The protein localises to the cytoplasm. It carries out the reaction ATP + H2O + cellular proteinSide 1 = ADP + phosphate + cellular proteinSide 2.. Its function is as follows. Part of the Sec protein translocase complex. Interacts with the SecYEG preprotein conducting channel. Has a central role in coupling the hydrolysis of ATP to the transfer of proteins into and across the cell membrane, serving both as a receptor for the preprotein-SecB complex and as an ATP-driven molecular motor driving the stepwise translocation of polypeptide chains across the membrane. This is Protein translocase subunit SecA from Pseudomonas fluorescens (strain Pf0-1).